The chain runs to 947 residues: DNA mismatch repair protein MutS 2 (947 aa).

The interval 623-643 (IPNDTHLGSGPVPASRDGSDD) is disordered. Residue 659 to 666 (GPNMSGKS) coordinates ATP. The interval 841-916 (AETADTGVEA…GAAAEDELPE (76 aa)) is disordered.

Belongs to the DNA mismatch repair MutS family.

This protein is involved in the repair of mismatches in DNA. It is possible that it carries out the mismatch recognition step. This protein has a weak ATPase activity. The protein is DNA mismatch repair protein MutS 2 of Haloarcula marismortui (strain ATCC 43049 / DSM 3752 / JCM 8966 / VKM B-1809) (Halobacterium marismortui).